Consider the following 279-residue polypeptide: HTH-type transcriptional activator RhaS (279 aa).

The HTH araC/xylS-type domain maps to 175-273 (QALLGWLQNN…SQAPKSLRHQ (99 aa)). 2 DNA-binding regions (H-T-H motif) span residues 192–213 (GGLADQFSLPLRTLHRQLKQHT) and 240–263 (ITTIAHACGFSDSNHFSTQFRKAF).

Binds DNA as a dimer.

The protein localises to the cytoplasm. In terms of biological role, activates expression of the rhaBAD and rhaT operons. The chain is HTH-type transcriptional activator RhaS from Pectobacterium atrosepticum (strain SCRI 1043 / ATCC BAA-672) (Erwinia carotovora subsp. atroseptica).